Reading from the N-terminus, the 426-residue chain is UDP-N-acetylglucosamine 1-carboxyvinyltransferase (426 aa).

22–23 is a phosphoenolpyruvate binding site; it reads KN. Arg99 is a UDP-N-acetyl-alpha-D-glucosamine binding site. Residue Cys123 is the Proton donor of the active site. Position 123 is a 2-(S-cysteinyl)pyruvic acid O-phosphothioketal (Cys123). UDP-N-acetyl-alpha-D-glucosamine is bound by residues 128 to 132, Asp313, and Ile335; that span reads RPIDL.

It belongs to the EPSP synthase family. MurA subfamily.

The protein resides in the cytoplasm. It catalyses the reaction phosphoenolpyruvate + UDP-N-acetyl-alpha-D-glucosamine = UDP-N-acetyl-3-O-(1-carboxyvinyl)-alpha-D-glucosamine + phosphate. The protein operates within cell wall biogenesis; peptidoglycan biosynthesis. Its function is as follows. Cell wall formation. Adds enolpyruvyl to UDP-N-acetylglucosamine. The chain is UDP-N-acetylglucosamine 1-carboxyvinyltransferase from Zymomonas mobilis subsp. mobilis (strain ATCC 31821 / ZM4 / CP4).